A 149-amino-acid polypeptide reads, in one-letter code: uncharacterized protein (149 aa).

Residues 34 to 94 (HTPCLPKVPR…NPIGSQRIHS (61 aa)) are disordered. Positions 56–66 (QSPHRQGDRRR) are enriched in basic and acidic residues.

It is found in the mitochondrion. This is an uncharacterized protein from Arabidopsis thaliana (Mouse-ear cress).